The chain runs to 450 residues: Phosphoglucosamine mutase (450 aa).

The active-site Phosphoserine intermediate is the Ser-104. Ser-104, Asp-245, Asp-247, and Asp-249 together coordinate Mg(2+). The residue at position 104 (Ser-104) is a Phosphoserine.

The protein belongs to the phosphohexose mutase family. Mg(2+) serves as cofactor. Activated by phosphorylation.

The enzyme catalyses alpha-D-glucosamine 1-phosphate = D-glucosamine 6-phosphate. In terms of biological role, catalyzes the conversion of glucosamine-6-phosphate to glucosamine-1-phosphate. This is Phosphoglucosamine mutase from Phenylobacterium zucineum (strain HLK1).